A 531-amino-acid chain; its full sequence is Na(+)/H(+) antiporter NhaB (531 aa).

The next 12 membrane-spanning stretches (helical) occupy residues 13 to 33 (FLGKAPDWYKIAIISFLIINP), 34 to 54 (LVFFFVDPFAAGWLLVVEFIF), 90 to 110 (LVANIEVLLLLVFMVAGIYFM), 121 to 141 (ILIGIKSKTALSVAFCFTAAF), 145 to 165 (FLDALTVIAVVISVAVGFYAI), 206 to 226 (LLMHAGVGTALGGVMTMVGEP), 242 to 262 (FIIRMLPVTAPVFICGLLTCV), 308 to 328 (VIAVWLIVALAMHLAAVGLIG), 352 to 372 (EEALPFTALLAVFFAIVAVII), 394 to 414 (LALFYVANGILSMVSDNVFVG), 456 to 476 (GQAAFLFLLTSALAPLIQLSY), and 482 to 502 (MALPYTIVLALVGLFGISFLL).

Belongs to the NhaB Na(+)/H(+) (TC 2.A.34) antiporter family.

It is found in the cell inner membrane. The enzyme catalyses 2 Na(+)(in) + 3 H(+)(out) = 2 Na(+)(out) + 3 H(+)(in). Functionally, na(+)/H(+) antiporter that extrudes sodium in exchange for external protons. The chain is Na(+)/H(+) antiporter NhaB from Aliivibrio salmonicida (strain LFI1238) (Vibrio salmonicida (strain LFI1238)).